The primary structure comprises 207 residues: Ras-related protein RABH1d (207 aa).

16–23 (GDQSVGKT) is a GTP binding site. The short motif at 38–46 (YQATIGIDF) is the Effector region element. GTP is bound by residues 64 to 68 (DTAGQ), 122 to 125 (NKTD), and 152 to 153 (SA). S-geranylgeranyl cysteine attachment occurs at residues cysteine 205 and cysteine 207. The residue at position 207 (cysteine 207) is a Cysteine methyl ester.

This sequence belongs to the small GTPase superfamily. Rab family.

Its subcellular location is the golgi apparatus membrane. Protein transport. Regulator of membrane traffic from the Golgi apparatus towards the endoplasmic reticulum (ER). In Arabidopsis thaliana (Mouse-ear cress), this protein is Ras-related protein RABH1d (RABH1D).